Here is a 194-residue protein sequence, read N- to C-terminus: uncharacterized protein (194 aa).

The 166-residue stretch at 20 to 185 folds into the Exonuclease domain; that stretch reads RIFIDTETTG…ADCRMTLGII (166 aa).

This is an uncharacterized protein from Escherichia coli (Bacteriophage 186).